The primary structure comprises 64 residues: DNA-directed RNA polymerase subunit omega (64 aa).

The protein belongs to the RNA polymerase subunit omega family. In terms of assembly, the RNAP catalytic core consists of 2 alpha, 1 beta, 1 beta' and 1 omega subunit. When a sigma factor is associated with the core the holoenzyme is formed, which can initiate transcription.

It carries out the reaction RNA(n) + a ribonucleoside 5'-triphosphate = RNA(n+1) + diphosphate. In terms of biological role, promotes RNA polymerase assembly. Latches the N- and C-terminal regions of the beta' subunit thereby facilitating its interaction with the beta and alpha subunits. This is DNA-directed RNA polymerase subunit omega from Oceanobacillus iheyensis (strain DSM 14371 / CIP 107618 / JCM 11309 / KCTC 3954 / HTE831).